The chain runs to 592 residues: Aspartate--tRNA ligase (592 aa).

Glutamate 173 is a binding site for L-aspartate. The tract at residues 197–200 (QLFK) is aspartate. Residue arginine 219 participates in L-aspartate binding. ATP is bound by residues 219–221 (RDE) and glutamine 228. An L-aspartate-binding site is contributed by histidine 448. Glutamate 482 provides a ligand contact to ATP. Arginine 489 is an L-aspartate binding site. Position 534–537 (534–537 (GLDR)) interacts with ATP.

The protein belongs to the class-II aminoacyl-tRNA synthetase family. Type 1 subfamily. Homodimer.

Its subcellular location is the cytoplasm. The catalysed reaction is tRNA(Asp) + L-aspartate + ATP = L-aspartyl-tRNA(Asp) + AMP + diphosphate. Its function is as follows. Catalyzes the attachment of L-aspartate to tRNA(Asp) in a two-step reaction: L-aspartate is first activated by ATP to form Asp-AMP and then transferred to the acceptor end of tRNA(Asp). This is Aspartate--tRNA ligase from Shewanella putrefaciens (strain CN-32 / ATCC BAA-453).